A 332-amino-acid polypeptide reads, in one-letter code: D-galactose/methyl-galactoside binding periplasmic protein MglB (332 aa).

An N-terminal signal peptide occupies residues 1 to 23; sequence MNKKVLTLSAVMASMLFGAAAHA. Beta-D-galactose contacts are provided by Asp37 and Asn114. Beta-D-glucose contacts are provided by Asp37 and Asn114. The Ca(2+) site is built by Asp157, Asn159, Asp161, Gln163, and Gln165. His175, Asp177, and Arg181 together coordinate beta-D-galactose. The beta-D-glucose site is built by His175, Asp177, and Arg181. Residue Glu228 coordinates Ca(2+). Positions 234, 259, and 279 each coordinate beta-D-galactose. Beta-D-glucose is bound by residues Asn234, Asp259, and Asn279.

This sequence belongs to the bacterial solute-binding protein 2 family. In terms of assembly, the ABC transporter complex is composed of one ATP-binding protein (MglA), two transmembrane proteins (MglC) and a solute-binding protein (MglB).

Its subcellular location is the periplasm. Functionally, part of the ABC transporter complex MglABC involved in galactose/methyl galactoside import. In addition, binds D-galactose and D-glucose and plays a role in the chemotaxis towards these two sugars by interacting with the Trg chemoreceptor. The chain is D-galactose/methyl-galactoside binding periplasmic protein MglB (mglB) from Escherichia coli O6:H1 (strain CFT073 / ATCC 700928 / UPEC).